Here is a 499-residue protein sequence, read N- to C-terminus: Cytochrome P450 81E8 (499 aa).

The helical transmembrane segment at 3-23 (TFYLSLIISLFFLIITLKVFF) threads the bilayer. Residue Cys-436 participates in heme binding.

Belongs to the cytochrome P450 family. Requires heme as cofactor.

The protein localises to the membrane. Its function is as follows. Probable monooxygenases exhibiting no activity with isoflavones such as formononetin, biochanin A, pseudobaptigenin, daidzein, genistein, isoformononetin and prunetin, or with flavonoids including naringenin, liquiritigenin, apigenin, luteolin, or kaempferol. In Medicago truncatula (Barrel medic), this protein is Cytochrome P450 81E8.